The primary structure comprises 341 residues: DNA-directed RNA polymerase subunit alpha (341 aa).

Residues 1-223 (MEQKRPQLKA…DELSVFGNVE (223 aa)) are alpha N-terminal domain (alpha-NTD). The tract at residues 268–341 (PQPFPTDQDT…LAQFGLALRD (74 aa)) is alpha C-terminal domain (alpha-CTD).

Belongs to the RNA polymerase alpha chain family. As to quaternary structure, homodimer. The RNAP catalytic core consists of 2 alpha, 1 beta, 1 beta' and 1 omega subunit. When a sigma factor is associated with the core the holoenzyme is formed, which can initiate transcription.

The enzyme catalyses RNA(n) + a ribonucleoside 5'-triphosphate = RNA(n+1) + diphosphate. Functionally, DNA-dependent RNA polymerase catalyzes the transcription of DNA into RNA using the four ribonucleoside triphosphates as substrates. In Deinococcus radiodurans (strain ATCC 13939 / DSM 20539 / JCM 16871 / CCUG 27074 / LMG 4051 / NBRC 15346 / NCIMB 9279 / VKM B-1422 / R1), this protein is DNA-directed RNA polymerase subunit alpha.